The primary structure comprises 931 residues: Protocadherin gamma-B2 (931 aa).

Residues 1–30 form the signal peptide; it reads MKASSGRCGLVRWLQVLLPFLLSLFPGALP. 6 Cadherin domains span residues 31-133, 134-242, 243-347, 348-452, 453-562, and 570-675; these read VQIR…TPLF, KQTK…PPVF, SQDV…APEV, IVTS…APVF, QQTS…APRV, and DGSA…LPDL. Residues 31-691 are Extracellular-facing; that stretch reads VQIRYSIPEE…SDPQAKLQFY (661 aa). Residues Asn-419 and Asn-545 are each glycosylated (N-linked (GlcNAc...) asparagine). The chain crosses the membrane as a helical span at residues 692-712; it reads LVVALALISVLFFLAVILAIS. The Cytoplasmic portion of the chain corresponds to 713–931; it reads LRLRLSSRSD…KKKSGKKEKK (219 aa). 2 disordered regions span residues 814–840 and 901–931; these read DWRF…WPNN and ATLT…KEKK. Polar residues predominate over residues 815–840; that stretch reads WRFSQAQRPGTSGSQNGDDTGTWPNN. Residues 921–931 show a composition bias toward basic residues; sequence NKKKSGKKEKK.

It localises to the cell membrane. In terms of biological role, potential calcium-dependent cell-adhesion protein. May be involved in the establishment and maintenance of specific neuronal connections in the brain. The sequence is that of Protocadherin gamma-B2 (PCDHGB2) from Homo sapiens (Human).